A 42-amino-acid chain; its full sequence is Small protein MntS (42 aa).

It localises to the cytoplasm. Required for repression of mntH by MntR. May function as a chaperone that makes manganese more available by delivering it to the necessary cellular locations when manganese is limiting. This chain is Small protein MntS (mntS), found in Escherichia coli (strain K12).